The following is a 97-amino-acid chain: Small nuclear ribonucleoprotein Sm D3 (97 aa).

The Sm domain occupies 3-75; that stretch reads LCIKLLHETQ…IRFLIVPDML (73 aa).

This sequence belongs to the snRNP core protein family. Belongs to the 40S cdc5-associated complex (or cwf complex), a spliceosome sub-complex reminiscent of a late-stage spliceosome composed of the U2, U5 and U6 snRNAs and at least brr2, cdc5, cwf2/prp3, cwf3/syf1, cwf4/syf3, cwf5/ecm2, spp42/cwf6, cwf7/spf27, cwf8, cwf9, cwf10, cwf11, cwf12, prp45/cwf13, cwf14, cwf15, cwf16, cwf17, cwf18, cwf19, cwf20, cwf21, cwf22, cwf23, cwf24, cwf25, cwf26, cyp7/cwf27, cwf28, cwf29/ist3, lea1, msl1, prp5/cwf1, prp10, prp12/sap130, prp17, prp22, sap61, sap62, sap114, sap145, slu7, smb1, smd1, smd3, smf1, smg1 and syf2. Interacts with saf5; the interaction is direct.

The protein resides in the nucleus. Its subcellular location is the cytoplasm. It is found in the cytosol. Its function is as follows. Plays a role in pre-mRNA splicing as a core component of the spliceosomal U1, U2, U4 and U5 small nuclear ribonucleoproteins (snRNPs), the building blocks of the spliceosome. This chain is Small nuclear ribonucleoprotein Sm D3 (smd3), found in Schizosaccharomyces pombe (strain 972 / ATCC 24843) (Fission yeast).